The primary structure comprises 257 residues: Acyl-[acyl-carrier-protein]--UDP-N-acetylglucosamine O-acyltransferase (257 aa).

It belongs to the transferase hexapeptide repeat family. LpxA subfamily. Homotrimer.

The protein localises to the cytoplasm. The enzyme catalyses a (3R)-hydroxyacyl-[ACP] + UDP-N-acetyl-alpha-D-glucosamine = a UDP-3-O-[(3R)-3-hydroxyacyl]-N-acetyl-alpha-D-glucosamine + holo-[ACP]. Its pathway is glycolipid biosynthesis; lipid IV(A) biosynthesis; lipid IV(A) from (3R)-3-hydroxytetradecanoyl-[acyl-carrier-protein] and UDP-N-acetyl-alpha-D-glucosamine: step 1/6. Functionally, involved in the biosynthesis of lipid A, a phosphorylated glycolipid that anchors the lipopolysaccharide to the outer membrane of the cell. This Anaeromyxobacter sp. (strain K) protein is Acyl-[acyl-carrier-protein]--UDP-N-acetylglucosamine O-acyltransferase.